Consider the following 202-residue polypeptide: Protein GrpE (202 aa).

The segment covering 1–14 (MENTQENPTSQNPT) has biased composition (polar residues). A disordered region spans residues 1–58 (MENTQENPTSQNPTPADEAARQAAEAASGEPQDQARQPAAAAGEQPAQAQPAGAEAAL). The segment covering 21–58 (RQAAEAASGEPQDQARQPAAAAGEQPAQAQPAGAEAAL) has biased composition (low complexity).

It belongs to the GrpE family. Homodimer.

The protein resides in the cytoplasm. In terms of biological role, participates actively in the response to hyperosmotic and heat shock by preventing the aggregation of stress-denatured proteins, in association with DnaK and GrpE. It is the nucleotide exchange factor for DnaK and may function as a thermosensor. Unfolded proteins bind initially to DnaJ; upon interaction with the DnaJ-bound protein, DnaK hydrolyzes its bound ATP, resulting in the formation of a stable complex. GrpE releases ADP from DnaK; ATP binding to DnaK triggers the release of the substrate protein, thus completing the reaction cycle. Several rounds of ATP-dependent interactions between DnaJ, DnaK and GrpE are required for fully efficient folding. The sequence is that of Protein GrpE from Paraburkholderia phymatum (strain DSM 17167 / CIP 108236 / LMG 21445 / STM815) (Burkholderia phymatum).